The primary structure comprises 253 residues: Triosephosphate isomerase (253 aa).

9–11 (NWK) serves as a coordination point for substrate. Histidine 96 acts as the Electrophile in catalysis. Glutamate 169 (proton acceptor) is an active-site residue. Substrate-binding positions include glycine 175, serine 215, and 236 to 237 (GG).

This sequence belongs to the triosephosphate isomerase family. As to quaternary structure, homodimer.

The protein resides in the cytoplasm. It catalyses the reaction D-glyceraldehyde 3-phosphate = dihydroxyacetone phosphate. It functions in the pathway carbohydrate biosynthesis; gluconeogenesis. The protein operates within carbohydrate degradation; glycolysis; D-glyceraldehyde 3-phosphate from glycerone phosphate: step 1/1. Involved in the gluconeogenesis. Catalyzes stereospecifically the conversion of dihydroxyacetone phosphate (DHAP) to D-glyceraldehyde-3-phosphate (G3P). This Borreliella burgdorferi (strain ZS7) (Borrelia burgdorferi) protein is Triosephosphate isomerase.